Here is a 254-residue protein sequence, read N- to C-terminus: 2,3-bisphosphoglycerate-dependent phosphoglycerate mutase (254 aa).

Residues 15-22, 28-29, arginine 67, 94-97, lysine 105, 121-122, and 188-189 contribute to the substrate site; these read RHGQSEWN, TG, ERHY, RR, and GN. Catalysis depends on histidine 16, which acts as the Tele-phosphohistidine intermediate. Glutamate 94 acts as the Proton donor/acceptor in catalysis.

Belongs to the phosphoglycerate mutase family. BPG-dependent PGAM subfamily.

It catalyses the reaction (2R)-2-phosphoglycerate = (2R)-3-phosphoglycerate. The protein operates within carbohydrate degradation; glycolysis; pyruvate from D-glyceraldehyde 3-phosphate: step 3/5. Its function is as follows. Catalyzes the interconversion of 2-phosphoglycerate and 3-phosphoglycerate. This Corynebacterium jeikeium (strain K411) protein is 2,3-bisphosphoglycerate-dependent phosphoglycerate mutase.